The sequence spans 294 residues: ATP synthase gamma chain (294 aa).

This sequence belongs to the ATPase gamma chain family. F-type ATPases have 2 components, CF(1) - the catalytic core - and CF(0) - the membrane proton channel. CF(1) has five subunits: alpha(3), beta(3), gamma(1), delta(1), epsilon(1). CF(0) has three main subunits: a, b and c.

It localises to the cell inner membrane. Functionally, produces ATP from ADP in the presence of a proton gradient across the membrane. The gamma chain is believed to be important in regulating ATPase activity and the flow of protons through the CF(0) complex. This Nitrosomonas europaea (strain ATCC 19718 / CIP 103999 / KCTC 2705 / NBRC 14298) protein is ATP synthase gamma chain.